The chain runs to 278 residues: FALAHMVNDFDIMKSYLDEGANGIETDITFSPEGEPESAFHGVPCDCKRWCDRTVSFDSYLQKTSDLSTPGHPDYRENLLIIILDLKLNGLSQDALANGGRRLADKLAAHFWTGGRRDQRATFVVSVPQTSQKVFMKTFREEMEAIGMGDMNAKVGFDFTDNGDVSVTKAVYDELGITEHIWASDGITNCVALLFRGTSRLEELIQKRDEGESTYISKVYAWTYDKETSVVLALELGVDGVMTNYADFVISILNKPEHSSKYRLATYEDDPFERFKAV.

The active site involves His5. 2 residues coordinate Mg(2+): Glu25 and Asp27. The active-site Nucleophile is His41. Disulfide bonds link Cys45–Cys51 and Cys47–Cys190. Mg(2+) is bound at residue Asp85.

Belongs to the arthropod phospholipase D family. Class II subfamily. Mg(2+) is required as a cofactor. Expressed by the venom gland.

It is found in the secreted. It carries out the reaction an N-(acyl)-sphingosylphosphocholine = an N-(acyl)-sphingosyl-1,3-cyclic phosphate + choline. The catalysed reaction is an N-(acyl)-sphingosylphosphoethanolamine = an N-(acyl)-sphingosyl-1,3-cyclic phosphate + ethanolamine. It catalyses the reaction a 1-acyl-sn-glycero-3-phosphocholine = a 1-acyl-sn-glycero-2,3-cyclic phosphate + choline. The enzyme catalyses a 1-acyl-sn-glycero-3-phosphoethanolamine = a 1-acyl-sn-glycero-2,3-cyclic phosphate + ethanolamine. Its function is as follows. Dermonecrotic toxins cleave the phosphodiester linkage between the phosphate and headgroup of certain phospholipids (sphingolipid and lysolipid substrates), forming an alcohol (often choline) and a cyclic phosphate. This toxin acts on sphingomyelin (SM). It may also act on ceramide phosphoethanolamine (CPE), lysophosphatidylcholine (LPC) and lysophosphatidylethanolamine (LPE), but not on lysophosphatidylserine (LPS), and lysophosphatidylglycerol (LPG). It acts by transphosphatidylation, releasing exclusively cyclic phosphate products as second products. Induces dermonecrosis, hemolysis, increased vascular permeability, edema, inflammatory response, and platelet aggregation. This Loxosceles spinulosa (Recluse spider) protein is Dermonecrotic toxin LspiSicTox-betaIE2ii.